The sequence spans 467 residues: Chromosomal replication initiator protein DnaA (467 aa).

The segment at 1–90 (MSLSLWQQCL…KPVTQTPQAA (90 aa)) is domain I, interacts with DnaA modulators. The domain II stretch occupies residues 91–130 (VTSNVAAPAQVAQTQPQRAAPSMRSGWDNVPAPAEPTYRS). A domain III, AAA+ region region spans residues 131 to 347 (NVNVKHTFDN…GALNRVIANA (217 aa)). The ATP site is built by G175, G177, K178, and T179. The tract at residues 348–467 (NFTGRAITID…FSNLIRTLSS (120 aa)) is domain IV, binds dsDNA.

Belongs to the DnaA family. In terms of assembly, oligomerizes as a right-handed, spiral filament on DNA at oriC.

The protein resides in the cytoplasm. Its function is as follows. Plays an essential role in the initiation and regulation of chromosomal replication. ATP-DnaA binds to the origin of replication (oriC) to initiate formation of the DNA replication initiation complex once per cell cycle. Binds the DnaA box (a 9 base pair repeat at the origin) and separates the double-stranded (ds)DNA. Forms a right-handed helical filament on oriC DNA; dsDNA binds to the exterior of the filament while single-stranded (ss)DNA is stabiized in the filament's interior. The ATP-DnaA-oriC complex binds and stabilizes one strand of the AT-rich DNA unwinding element (DUE), permitting loading of DNA polymerase. After initiation quickly degrades to an ADP-DnaA complex that is not apt for DNA replication. Binds acidic phospholipids. The sequence is that of Chromosomal replication initiator protein DnaA from Escherichia coli (strain ATCC 8739 / DSM 1576 / NBRC 3972 / NCIMB 8545 / WDCM 00012 / Crooks).